An 86-amino-acid polypeptide reads, in one-letter code: Small ribosomal subunit protein uS15 (86 aa).

Belongs to the universal ribosomal protein uS15 family. As to quaternary structure, part of the 30S ribosomal subunit. Forms a bridge to the 50S subunit in the 70S ribosome, contacting the 23S rRNA.

One of the primary rRNA binding proteins, it binds directly to 16S rRNA where it helps nucleate assembly of the platform of the 30S subunit by binding and bridging several RNA helices of the 16S rRNA. In terms of biological role, forms an intersubunit bridge (bridge B4) with the 23S rRNA of the 50S subunit in the ribosome. This chain is Small ribosomal subunit protein uS15, found in Neorickettsia sennetsu (strain ATCC VR-367 / Miyayama) (Ehrlichia sennetsu).